We begin with the raw amino-acid sequence, 196 residues long: dTTP/UTP pyrophosphatase (196 aa).

Residue Asp-77 is the Proton acceptor of the active site.

It belongs to the Maf family. YhdE subfamily. Requires a divalent metal cation as cofactor.

It localises to the cytoplasm. The catalysed reaction is dTTP + H2O = dTMP + diphosphate + H(+). The enzyme catalyses UTP + H2O = UMP + diphosphate + H(+). Functionally, nucleoside triphosphate pyrophosphatase that hydrolyzes dTTP and UTP. May have a dual role in cell division arrest and in preventing the incorporation of modified nucleotides into cellular nucleic acids. The polypeptide is dTTP/UTP pyrophosphatase (Christiangramia forsetii (strain DSM 17595 / CGMCC 1.15422 / KT0803) (Gramella forsetii)).